The sequence spans 678 residues: MKCLKDGFLHHIRSIKSGSTLTAVSSNQLVNLYSKSGLLREARNVFDEMLERNVYSWNAVIAAYVKFNNVKEARELFESDNCERDLITYNTLLSGFAKTDGCESEAIEMFGEMHRKEKDDIWIDDFTVTTMVKLSAKLTNVFYGEQLHGVLVKTGNDGTKFAVSSLIHMYSKCGKFKEVCNIFNGSCVEFVDSVARNAMIAAYCREGDIDKALSVFWRNPELNDTISWNTLIAGYAQNGYEEEALKMAVSMEENGLKWDEHSFGAVLNVLSSLKSLKIGKEVHARVLKNGSYSNKFVSSGIVDVYCKCGNMKYAESAHLLYGFGNLYSASSMIVGYSSQGKMVEAKRLFDSLSEKNLVVWTAMFLGYLNLRQPDSVLELARAFIANETNTPDSLVMVSVLGACSLQAYMEPGKEIHGHSLRTGILMDKKLVTAFVDMYSKCGNVEYAERIFDSSFERDTVMYNAMIAGCAHHGHEAKSFQHFEDMTEGGFKPDEITFMALLSACRHRGLVLEGEKYFKSMIEAYNISPETGHYTCMIDLYGKAYRLDKAIELMEGIDQVEKDAVILGAFLNACSWNKNTELVKEVEEKLLVIEGSNGSRYIQIANAYASSGRWDEMQRIRHQMRGKELEIFSGCSWANIDKQFHMFTSSDISHYETEAIYAMLHFVTKDLSEIDEIMI.

PPR repeat units follow at residues 22-56, 57-84, 85-116, 124-158, 159-190, 192-222, 224-258, 259-293, 294-324, 325-359, 360-390, 392-426, 427-457, 458-492, 493-528, and 529-563; these read TAVS…NVYS, WNAV…NCER, DLIT…MHRK, DDFT…GNDG, TKFA…CVEF, DSVA…NPEL, DTIS…GLKW, DEHS…GSYS, NKFV…YGFG, NLYS…NLVV, WTAM…ETNT, DSLV…GILM, DKKL…SFER, DTVM…GFKP, DEIT…NISP, and ETGH…EKDA. A type E motif region spans residues 565-640; it reads ILGAFLNACS…FSGCSWANID (76 aa). Residues 641–671 form a type E(+) motif region; the sequence is KQFHMFTSSDISHYETEAIYAMLHFVTKDLS.

This sequence belongs to the PPR family. PCMP-E subfamily.

The sequence is that of Putative pentatricopeptide repeat-containing protein At3g18840 (PCMP-E92) from Arabidopsis thaliana (Mouse-ear cress).